A 394-amino-acid chain; its full sequence is Beta-ketothiolase BktB (394 aa).

The active-site Acyl-thioester intermediate is the cysteine 90. Catalysis depends on proton acceptor residues histidine 350 and cysteine 380.

Belongs to the thiolase-like superfamily. Thiolase family.

It catalyses the reaction an acyl-CoA + acetyl-CoA = a 3-oxoacyl-CoA + CoA. It carries out the reaction 2 acetyl-CoA = acetoacetyl-CoA + CoA. Its function is as follows. Required for efficient production of poly(beta-hydroxybutyrate-co-beta-hydroxyvalerate) (PHBV). Catalyzes the condensation of acetyl-CoA and propionyl-CoA to form beta-ketovaleryl-CoA, and the condensation of two acetyl-CoA molecules to form acetoacetyl-CoA. The sequence is that of Beta-ketothiolase BktB (bktB) from Cupriavidus necator (strain ATCC 17699 / DSM 428 / KCTC 22496 / NCIMB 10442 / H16 / Stanier 337) (Ralstonia eutropha).